The following is a 624-amino-acid chain: MAKQEQRFDYVKIALASPERIRQWGERTLPNGQVVGEVTKPETINYRTLKPEMDGLFCEKIFGPAKDWECHCGKYKRVRHRGIVCERCGVEVTESRVRRHRMGFIKLAAPVAHVWYLKGIPSYIAILLDMPLRDVEQIVYFNSYVVLNPGNHSELQYKQLLNEDQWMEIEDQIYAEESDLEGIEVGIGAEALQQLLQDLNLNEESEKLRQEIAESKGQKRAKLIKRLRVIDNFIGTESRPEWMVLNVIPVIPPDLRPMVQLDGGRFATSDLNDLYRRVINRNNRLARLQEILAPEIIVRNEKRMLQEAVDALIDNGRRGRTVVGANNRPLKSLSDIIEGKQGRFRQNLLGKRVDYSGRSVIVVGPNLKIHQCGLPREMAIELFQPFVIHRLIKNHSINNIKQAKKLIQKNDPLIWDVLEEVIEGHPVMLNRAPTLHRLGIQAFEPILVEGRAIQLHPLVCPAFNADFDGDQMAVHVPLSIEAQAEARMLMLASGNILSPATGQPIVTPSQDMVLGCYYLTAENPGAQKGAGRYFANLEDAIRAFEQGSVDLHAWVWVRFDGEVESEGESDEPESVVAADDGTVTKTYRFRRIRETEDGQRLSQYVKTTPGRILFNNTVQTALIH.

4 residues coordinate Zn(2+): cysteine 70, cysteine 72, cysteine 85, and cysteine 88. Mg(2+) is bound by residues aspartate 466, aspartate 468, and aspartate 470.

It belongs to the RNA polymerase beta' chain family. RpoC1 subfamily. In cyanobacteria the RNAP catalytic core is composed of 2 alpha, 1 beta, 1 beta', 1 gamma and 1 omega subunit. When a sigma factor is associated with the core the holoenzyme is formed, which can initiate transcription. It depends on Mg(2+) as a cofactor. Zn(2+) is required as a cofactor.

The catalysed reaction is RNA(n) + a ribonucleoside 5'-triphosphate = RNA(n+1) + diphosphate. Its function is as follows. DNA-dependent RNA polymerase catalyzes the transcription of DNA into RNA using the four ribonucleoside triphosphates as substrates. This chain is DNA-directed RNA polymerase subunit gamma, found in Synechococcus elongatus (strain ATCC 33912 / PCC 7942 / FACHB-805) (Anacystis nidulans R2).